Consider the following 222-residue polypeptide: 2-C-methyl-D-erythritol 4-phosphate cytidylyltransferase (222 aa).

The protein belongs to the IspD/TarI cytidylyltransferase family. IspD subfamily.

It carries out the reaction 2-C-methyl-D-erythritol 4-phosphate + CTP + H(+) = 4-CDP-2-C-methyl-D-erythritol + diphosphate. Its pathway is isoprenoid biosynthesis; isopentenyl diphosphate biosynthesis via DXP pathway; isopentenyl diphosphate from 1-deoxy-D-xylulose 5-phosphate: step 2/6. Catalyzes the formation of 4-diphosphocytidyl-2-C-methyl-D-erythritol from CTP and 2-C-methyl-D-erythritol 4-phosphate (MEP). The polypeptide is 2-C-methyl-D-erythritol 4-phosphate cytidylyltransferase (Thermotoga sp. (strain RQ2)).